Here is a 264-residue protein sequence, read N- to C-terminus: Thymidylate synthase (264 aa).

Arg21 is a binding site for dUMP. His51 contacts (6R)-5,10-methylene-5,6,7,8-tetrahydrofolate. 126-127 (RR) contacts dUMP. Cys146 (nucleophile) is an active-site residue. DUMP is bound by residues 166–169 (RSCD), Asn177, and 207–209 (HLY). Asp169 is a binding site for (6R)-5,10-methylene-5,6,7,8-tetrahydrofolate. Ala263 lines the (6R)-5,10-methylene-5,6,7,8-tetrahydrofolate pocket.

Belongs to the thymidylate synthase family. Bacterial-type ThyA subfamily. Homodimer.

The protein resides in the cytoplasm. The enzyme catalyses dUMP + (6R)-5,10-methylene-5,6,7,8-tetrahydrofolate = 7,8-dihydrofolate + dTMP. It functions in the pathway pyrimidine metabolism; dTTP biosynthesis. Catalyzes the reductive methylation of 2'-deoxyuridine-5'-monophosphate (dUMP) to 2'-deoxythymidine-5'-monophosphate (dTMP) while utilizing 5,10-methylenetetrahydrofolate (mTHF) as the methyl donor and reductant in the reaction, yielding dihydrofolate (DHF) as a by-product. This enzymatic reaction provides an intracellular de novo source of dTMP, an essential precursor for DNA biosynthesis. This chain is Thymidylate synthase, found in Klebsiella pneumoniae subsp. pneumoniae (strain ATCC 700721 / MGH 78578).